We begin with the raw amino-acid sequence, 536 residues long: Pentatricopeptide repeat-containing protein At2g06000 (536 aa).

PPR repeat units lie at residues Ser102–Pro136, Asn137–Val167, Cys170–Phe200, Asp205–Pro239, Asp240–Ser274, Asp276–Pro310, Thr311–Pro345, Asp346–Pro380, Asn381–Pro415, Gln416–Pro450, Asp451–Pro485, and Asp486–Pro523.

It belongs to the PPR family. P subfamily.

The chain is Pentatricopeptide repeat-containing protein At2g06000 from Arabidopsis thaliana (Mouse-ear cress).